The chain runs to 596 residues: ATP-dependent lipid A-core flippase (596 aa).

6 consecutive transmembrane segments (helical) span residues 34-54, 80-100, 138-158, 164-184, 263-283, and 292-312; these read VWVL…EAGI, AAVV…GYLL, AVVF…ITLV, VVFL…IVAI, QPLT…IAVV, and VGGF…LKHL. Positions 38–321 constitute an ABC transmembrane type-1 domain; the sequence is VAGVLAMAAV…LMDVNQPLQR (284 aa). Residues 353–589 enclose the ABC transporter domain; the sequence is IEFSHVSFSY…GGLYAHLHRI (237 aa). ATP is bound at residue 389–396; it reads GPSGSGKT.

The protein belongs to the ABC transporter superfamily. Lipid exporter (TC 3.A.1.106) family. As to quaternary structure, homodimer.

The protein resides in the cell inner membrane. The catalysed reaction is ATP + H2O + lipid A-core oligosaccharideSide 1 = ADP + phosphate + lipid A-core oligosaccharideSide 2.. Involved in lipopolysaccharide (LPS) biosynthesis. Translocates lipid A-core from the inner to the outer leaflet of the inner membrane. Transmembrane domains (TMD) form a pore in the inner membrane and the ATP-binding domain (NBD) is responsible for energy generation. The polypeptide is ATP-dependent lipid A-core flippase (Burkholderia mallei (strain ATCC 23344)).